The chain runs to 256 residues: DNA repair protein RecO (256 aa).

It belongs to the RecO family.

Its function is as follows. Involved in DNA repair and RecF pathway recombination. The protein is DNA repair protein RecO of Streptococcus equi subsp. zooepidemicus (strain MGCS10565).